The primary structure comprises 202 residues: Protein-methionine-sulfoxide reductase heme-binding subunit MsrQ (202 aa).

Transmembrane regions (helical) follow at residues 8-28 (LAVF…AWIF), 42-62 (LGLG…LQKL), 75-95 (LGLW…VFIL), 110-130 (PYII…ITSN), 147-167 (LVYL…RADL), and 169-189 (EWTL…PSIA).

The protein belongs to the MsrQ family. In terms of assembly, heterodimer of a catalytic subunit (MsrP) and a heme-binding subunit (MsrQ). FMN serves as cofactor. It depends on heme b as a cofactor.

The protein resides in the cell inner membrane. Functionally, part of the MsrPQ system that repairs oxidized periplasmic proteins containing methionine sulfoxide residues (Met-O), using respiratory chain electrons. Thus protects these proteins from oxidative-stress damage caused by reactive species of oxygen and chlorine generated by the host defense mechanisms. MsrPQ is essential for the maintenance of envelope integrity under bleach stress, rescuing a wide series of structurally unrelated periplasmic proteins from methionine oxidation. MsrQ provides electrons for reduction to the reductase catalytic subunit MsrP, using the quinone pool of the respiratory chain. The protein is Protein-methionine-sulfoxide reductase heme-binding subunit MsrQ of Pseudomonas aeruginosa (strain LESB58).